The primary structure comprises 1154 residues: Coiled-coil domain-containing protein 136 (1154 aa).

Residues M1–H48 are disordered. Residues Y14–E32 are compositionally biased toward acidic residues. The residue at position 52 (S52) is a Phosphoserine. Coiled coils occupy residues Q696–Q733 and K859–V974. A compositionally biased stretch (basic and acidic residues) spans D1031–C1058. Residues D1031–F1131 are disordered. Positions D1077 to E1109 are enriched in acidic residues. Residues I1130 to A1150 traverse the membrane as a helical segment.

As to expression, expressed in gastric tissues. Down-regulated in gastric cancer.

Its subcellular location is the cytoplasmic vesicle. It is found in the secretory vesicle. It localises to the acrosome membrane. In terms of biological role, may play a role in acrosome formation in spermatogenesis and in fertilization. In Homo sapiens (Human), this protein is Coiled-coil domain-containing protein 136 (CCDC136).